A 289-amino-acid chain; its full sequence is MATPREIKKRINSVKNTRKITRTMEMVSTAKAKKATNKVNAAKPYADLTRELVSSLSSLASIIHSPYLRKPDKIRKVAILAIAANRGLCGGFNSNLLRMVKNRIEELKSKGVEVEVHAAGKKAISFFKFAKVELVTSYTNIDDKAGSKEANDLASYFMERFANESVDSVEIISTHYYSAANQKPETTTVLPLQMEETGSKGSSGPEVLYEPDPKTILENLLPMVIKTTFVKIILESVASEHIARRVAMKAATDAAGEMIKLLTRGYNRVRQAKITQEISEIVGGAEAIS.

The protein belongs to the ATPase gamma chain family. In terms of assembly, F-type ATPases have 2 components, CF(1) - the catalytic core - and CF(0) - the membrane proton channel. CF(1) has five subunits: alpha(3), beta(3), gamma(1), delta(1), epsilon(1). CF(0) has three main subunits: a, b and c.

Its subcellular location is the cell inner membrane. Produces ATP from ADP in the presence of a proton gradient across the membrane. The gamma chain is believed to be important in regulating ATPase activity and the flow of protons through the CF(0) complex. The protein is ATP synthase gamma chain of Leptospira biflexa serovar Patoc (strain Patoc 1 / ATCC 23582 / Paris).